The following is a 246-amino-acid chain: MSILVTRPSPAGEELVSRLRTLGQVAWHFPLIEFSPGQQLPQLADQLAALGESDLLFALSQHAVAFAQSQLHQQDRKWPRLPDYFAIGRTTALALHTVSGQKILYPQDREISEVLLQLPELQNIAGKRALILRGNGGRELIGDTLTARGAEVTFCECYQRCAIHYDGAEEAMRWQAREVTMVVVTSGEMLQQLWSLIPQWYREHWLLHCRLLVVSERLAKLARELGWQDIKVADNADNDALLRALQ.

This sequence belongs to the uroporphyrinogen-III synthase family. In terms of assembly, monomer.

The catalysed reaction is hydroxymethylbilane = uroporphyrinogen III + H2O. The protein operates within porphyrin-containing compound metabolism; protoporphyrin-IX biosynthesis; coproporphyrinogen-III from 5-aminolevulinate: step 3/4. In terms of biological role, catalyzes cyclization of the linear tetrapyrrole, hydroxymethylbilane, to the macrocyclic uroporphyrinogen III. This Escherichia coli (strain K12) protein is Uroporphyrinogen-III synthase (hemD).